The following is a 263-amino-acid chain: uncharacterized protein (263 aa).

13–20 serves as a coordination point for NADP(+); sequence TGSTSGIG. Residue Ser141 coordinates substrate. Tyr154 acts as the Proton acceptor in catalysis.

It belongs to the short-chain dehydrogenases/reductases (SDR) family.

This is an uncharacterized protein from Bacillus subtilis (strain 168).